We begin with the raw amino-acid sequence, 266 residues long: F-box/kelch-repeat protein At4g39560 (266 aa).

Positions 24–70 constitute an F-box domain; that stretch reads STQILSLPVDLLISILARVSRLDYPILSLVSKSFRSLIASPELYETR. Kelch repeat units lie at residues 130–176, 178–223, and 226–266; these read DIYN…VIDG, IYVA…KSAV, and EAIC…LLVA.

The protein is F-box/kelch-repeat protein At4g39560 of Arabidopsis thaliana (Mouse-ear cress).